The primary structure comprises 596 residues: MFKLPTISLLLVSWSCLVALSQAKTYSLPDLTTDYNNAIPVDEEEAQDPFASCKIYCEGNLLHTIQTAVPKLFADSKTFVDMKLNNSPDKTLEDFNAMMEAKNQTPSSEDLKQFVDKYFSAPGTELEKWTPTDWKENPSFLDLISDPDLKQWGVELNSIWKDLGRKMKDEVSKNPEYYSIIPVPNPVIVPGGRFIEFYYWDSYWIIRGLLYSQMFDTARGMIENFFSIVNRFGFIPNGGRVYYHGRSQPPLLTGMVKSYVDFTNDDKFAIDALDTLEHEFEFFVNNHNVTVKNHSLCVYRDSSSGPRPESYREDVETGEEFPTDEAKELHYSELKAGAESGMDFSSRWFISPTGTNDGNRSALSTTSIVPVDLNAYLYWNAKLIAEFHSKAGNTKKVTEYETKAEKLLLGIQEVLWNEEAGVWLDYDMINQKPRDYYTPTNLSPLWVKAFNISESEKISASVMAYIERNKLDSFPGGVPNTLSYTGEQWDAPNVWAPMQYILVEGLNNLNTPEAKNMSLKWATRWVKTNFAAFSKDRHMYEKYNADEFGVGGGGGEYEVQTGFGWSNGVIIEWLSKHGRDISIGSGCGCLAGEKRQ.

The signal sequence occupies residues 1–23; the sequence is MFKLPTISLLLVSWSCLVALSQA. Substrate contacts are provided by residues arginine 193, 200-201, asparagine 237, and 246-248; these read WD and RSQ. N-linked (GlcNAc...) asparagine glycans are attached at residues asparagine 288 and asparagine 293. The tract at residues 303-323 is disordered; the sequence is SSGPRPESYREDVETGEEFPT. Substrate contacts are provided by residues 307–309 and glycine 341; that span reads RPE. Aspartate 343 functions as the Proton donor/acceptor in the catalytic mechanism. 3 N-linked (GlcNAc...) asparagine glycosylation sites follow: asparagine 359, asparagine 451, and asparagine 516. The Proton donor/acceptor role is filled by glutamate 541. Position 556 (glutamate 556) interacts with substrate.

This sequence belongs to the glycosyl hydrolase 37 family. In terms of tissue distribution, in the adult brain predominantly expressed in glial cells (at protein level).

The catalysed reaction is alpha,alpha-trehalose + H2O = alpha-D-glucose + beta-D-glucose. In terms of biological role, enzyme that cleaves trehalose to produce 2 glucose molecules that can be used by the glycolytic pathway. Glycolysis is essential in glial cells but not in neurons; neurons rely on the citric acid cycle for their energy needs, and on lactate and alanine secreted into the hemolymph by glial cells to fuel it. The chain is Trehalase from Drosophila melanogaster (Fruit fly).